The chain runs to 245 residues: Bis(5'-nucleosyl)-tetraphosphatase PrpE [asymmetrical] (245 aa).

Belongs to the PrpE family. It depends on Ni(2+) as a cofactor.

The catalysed reaction is P(1),P(4)-bis(5'-guanosyl) tetraphosphate + H2O = GMP + GTP + 2 H(+). Its function is as follows. Asymmetrically hydrolyzes Ap4p to yield AMP and ATP. This chain is Bis(5'-nucleosyl)-tetraphosphatase PrpE [asymmetrical], found in Geobacillus thermodenitrificans (strain NG80-2).